A 335-amino-acid chain; its full sequence is tRNA N6-adenosine threonylcarbamoyltransferase (335 aa).

Fe cation-binding residues include His110 and His114. Residues 132–136 (LVSGG), Asp165, Gly178, and Asn271 each bind substrate. Position 299 (Asp299) interacts with Fe cation.

This sequence belongs to the KAE1 / TsaD family. Fe(2+) serves as cofactor.

It localises to the cytoplasm. It catalyses the reaction L-threonylcarbamoyladenylate + adenosine(37) in tRNA = N(6)-L-threonylcarbamoyladenosine(37) in tRNA + AMP + H(+). Its function is as follows. Required for the formation of a threonylcarbamoyl group on adenosine at position 37 (t(6)A37) in tRNAs that read codons beginning with adenine. Is involved in the transfer of the threonylcarbamoyl moiety of threonylcarbamoyl-AMP (TC-AMP) to the N6 group of A37, together with TsaE and TsaB. TsaD likely plays a direct catalytic role in this reaction. This is tRNA N6-adenosine threonylcarbamoyltransferase from Campylobacter jejuni subsp. jejuni serotype O:6 (strain 81116 / NCTC 11828).